Here is a 341-residue protein sequence, read N- to C-terminus: L-threonine 3-dehydrogenase (341 aa).

Residue C38 participates in Zn(2+) binding. Active-site charge relay system residues include T40 and H43. The Zn(2+) site is built by H63, E64, C93, C96, C99, and C107. Residues I175, D195, R200, 262-264 (LGI), and 286-287 (IY) contribute to the NAD(+) site.

The protein belongs to the zinc-containing alcohol dehydrogenase family. As to quaternary structure, homotetramer. It depends on Zn(2+) as a cofactor.

It is found in the cytoplasm. The enzyme catalyses L-threonine + NAD(+) = (2S)-2-amino-3-oxobutanoate + NADH + H(+). Its pathway is amino-acid degradation; L-threonine degradation via oxydo-reductase pathway; glycine from L-threonine: step 1/2. Its function is as follows. Catalyzes the NAD(+)-dependent oxidation of L-threonine to 2-amino-3-ketobutyrate. The polypeptide is L-threonine 3-dehydrogenase (Alteromonas mediterranea (strain DSM 17117 / CIP 110805 / LMG 28347 / Deep ecotype)).